The sequence spans 220 residues: MDQEAKDLLVRGAAQLGVELTSAQVGKFALFAAELRKWNRKINLTAITTEREIALKHFVDSLSLCRAVGKGGKLLDLGSGGGFPVIPFAILHPKSEVVSVDAVEKKIIFQRHMGRLLGLSCFQSIHARGEELAGRFAGHFDWIVSRAFSDIPTFVRMALPLLRPNGAIVAMKGQGGREEAETSRPALEVLGVEIRQVLEFPLPFSGDGRSLIVMGRKNES.

S-adenosyl-L-methionine-binding positions include Gly78, Phe83, 129 to 130 (GE), and Arg146.

Belongs to the methyltransferase superfamily. RNA methyltransferase RsmG family.

The protein resides in the cytoplasm. The catalysed reaction is guanosine(527) in 16S rRNA + S-adenosyl-L-methionine = N(7)-methylguanosine(527) in 16S rRNA + S-adenosyl-L-homocysteine. In terms of biological role, specifically methylates the N7 position of guanine in position 527 of 16S rRNA. The chain is Ribosomal RNA small subunit methyltransferase G from Geobacter metallireducens (strain ATCC 53774 / DSM 7210 / GS-15).